Here is a 423-residue protein sequence, read N- to C-terminus: SH2 domain-containing adapter protein F (423 aa).

Disordered stretches follow at residues 1 to 87 (MQQE…STTR), 110 to 208 (DPFD…WEWK), and 225 to 312 (DLPW…GEWT). Positions 192–203 (EDDERPPEEYDQ) are enriched in acidic residues. Phosphotyrosine is present on Tyr201. One can recognise an SH2 domain in the interval 323–418 (WYHGAISRTD…AEHMSLLYPV (96 aa)).

In terms of assembly, interacts with phosphorylated 'Tyr-720' of PDGFRA via its SH2 domain. Post-translationally, may become phosphorylated upon binding to PDGFRA. In terms of tissue distribution, expressed in skeletal muscle, brain, liver, prostate, testis, ovary, small intestine and colon.

Adapter protein which may play a role in the regulation of apoptosis in response to PDGF. The polypeptide is SH2 domain-containing adapter protein F (Homo sapiens (Human)).